The chain runs to 220 residues: Fructose-6-phosphate aldolase (220 aa).

K85 (schiff-base intermediate with substrate) is an active-site residue.

The protein belongs to the transaldolase family. Type 3A subfamily. In terms of assembly, homodecamer.

It localises to the cytoplasm. It carries out the reaction beta-D-fructose 6-phosphate = dihydroxyacetone + D-glyceraldehyde 3-phosphate. Functionally, catalyzes the reversible formation of fructose 6-phosphate from dihydroxyacetone and D-glyceraldehyde 3-phosphate via an aldolization reaction. In Salmonella choleraesuis (strain SC-B67), this protein is Fructose-6-phosphate aldolase.